A 336-amino-acid chain; its full sequence is MELHILFFILAGLLIAVLIGFSLWSARREKSRIFSNTFSTRPPSTPINNVVSDVPPSLNPQSYSQTMGQNSEIEVDNPVQIQQEVESSLREIKINLPGQDSAAYQNRPQETPIYSGQPVQPVQTQYQAQAQYQSQPQHIEPAFTQAPQSPIAEATSVLEQSVEELERQAAQGDVDIYSDASVRVELAKNSMQADSVAEQKPVAENNMLTLYVVAPEGQQFRGDYVVQSLEALGFQYGEYQIFHRHQHMGNSASPVIFSVANMMQPGIFDLTKIEHFSTVGLVLFMHLPSEGNDVVNLKLLLKTTENLAQALGGFVLNEHREIFDENSRQAYLARVS.

Topologically, residues methionine 1 to glutamate 2 are periplasmic. The chain crosses the membrane as a helical span at residues leucine 3–leucine 23. The Cytoplasmic segment spans residues tryptophan 24–serine 336.

It belongs to the ZipA family. As to quaternary structure, interacts with FtsZ via their C-terminal domains.

It is found in the cell inner membrane. Essential cell division protein that stabilizes the FtsZ protofilaments by cross-linking them and that serves as a cytoplasmic membrane anchor for the Z ring. Also required for the recruitment to the septal ring of downstream cell division proteins. The protein is Cell division protein ZipA of Actinobacillus pleuropneumoniae serotype 5b (strain L20).